A 259-amino-acid polypeptide reads, in one-letter code: 1,2-dihydroxy-1,2-dihydronaphthalene dehydrogenase (259 aa).

8 to 32 (SITGAGSGIGLELVRSFKSAGYYVS) contributes to the NAD(+) binding site. Ser-140 contributes to the substrate binding site. Tyr-153 (proton acceptor) is an active-site residue.

This sequence belongs to the short-chain dehydrogenases/reductases (SDR) family.

It carries out the reaction (1R,2S)-1,2-dihydronaphthalene-1,2-diol + NAD(+) = naphthalene-1,2-diol + NADH + H(+). It catalyses the reaction cis-1,2-dihydroxy-1,2-dihydrodibenzothiophene + NAD(+) = 1,2-dihydroxydibenzothiophene + NADH + H(+). The protein operates within aromatic compound metabolism; naphthalene degradation. Its function is as follows. Catalyzes the oxidation of naphthalene dihydrodiol into 1,2-dihydroxynaphthalene. This Pseudomonas putida (Arthrobacter siderocapsulatus) protein is 1,2-dihydroxy-1,2-dihydronaphthalene dehydrogenase (nahB).